The chain runs to 373 residues: NADPH-dependent 3-keto-steroid reductase Hsd3b5 (373 aa).

Residues glycine 10 to leucine 15, tyrosine 155, and lysine 159 each bind NADP(+). Lysine 159 (proton donor) is an active-site residue. A helical membrane pass occupies residues leucine 288–valine 308. The residue at position 350 (lysine 350) is an N6-acetyllysine.

It belongs to the 3-beta-HSD family. In terms of tissue distribution, expressed in the male liver, starting in late puberty.

It is found in the endoplasmic reticulum membrane. It localises to the mitochondrion membrane. It carries out the reaction a 3beta-hydroxysteroid + NADP(+) = a 3-oxosteroid + NADPH + H(+). The enzyme catalyses 5alpha-androstane-3beta,17beta-diol + NADP(+) = 17beta-hydroxy-5alpha-androstan-3-one + NADPH + H(+). It participates in steroid metabolism. Responsible for the reduction of the oxo group on the C-3 of 5alpha-androstane steroids. Catalyzes the conversion of dihydrotestosterone to its inactive form 5alpha-androstanediol, that does not bind androgen receptor/AR. Does not function as an isomerase. This is NADPH-dependent 3-keto-steroid reductase Hsd3b5 from Mus musculus (Mouse).